The primary structure comprises 297 residues: Phosphatidylserine decarboxylase proenzyme (297 aa).

Active-site charge relay system; for autoendoproteolytic cleavage activity residues include Asp-90, His-147, and Ser-252. Ser-252 acts as the Schiff-base intermediate with substrate; via pyruvic acid; for decarboxylase activity in catalysis. Ser-252 carries the post-translational modification Pyruvic acid (Ser); by autocatalysis.

This sequence belongs to the phosphatidylserine decarboxylase family. PSD-B subfamily. Prokaryotic type I sub-subfamily. Heterodimer of a large membrane-associated beta subunit and a small pyruvoyl-containing alpha subunit. Requires pyruvate as cofactor. In terms of processing, is synthesized initially as an inactive proenzyme. Formation of the active enzyme involves a self-maturation process in which the active site pyruvoyl group is generated from an internal serine residue via an autocatalytic post-translational modification. Two non-identical subunits are generated from the proenzyme in this reaction, and the pyruvate is formed at the N-terminus of the alpha chain, which is derived from the carboxyl end of the proenzyme. The autoendoproteolytic cleavage occurs by a canonical serine protease mechanism, in which the side chain hydroxyl group of the serine supplies its oxygen atom to form the C-terminus of the beta chain, while the remainder of the serine residue undergoes an oxidative deamination to produce ammonia and the pyruvoyl prosthetic group on the alpha chain. During this reaction, the Ser that is part of the protease active site of the proenzyme becomes the pyruvoyl prosthetic group, which constitutes an essential element of the active site of the mature decarboxylase.

Its subcellular location is the cell membrane. The catalysed reaction is a 1,2-diacyl-sn-glycero-3-phospho-L-serine + H(+) = a 1,2-diacyl-sn-glycero-3-phosphoethanolamine + CO2. It functions in the pathway phospholipid metabolism; phosphatidylethanolamine biosynthesis; phosphatidylethanolamine from CDP-diacylglycerol: step 2/2. Its function is as follows. Catalyzes the formation of phosphatidylethanolamine (PtdEtn) from phosphatidylserine (PtdSer). This chain is Phosphatidylserine decarboxylase proenzyme, found in Stutzerimonas stutzeri (strain A1501) (Pseudomonas stutzeri).